Consider the following 175-residue polypeptide: Protein tyrosine phosphatase PRL-1 (175 aa).

Residues 15–172 enclose the Tyrosine-protein phosphatase domain; that stretch reads KPSRVLFHFL…YKRRHQGAGC (158 aa). Cysteine 53 and cysteine 114 are oxidised to a cystine. Catalysis depends on aspartate 76, which acts as the Proton donor. Cysteine 114 acts as the Phosphocysteine intermediate in catalysis. 116–120 lines the substrate pocket; sequence AGLGR. Cysteine 172 is modified (cysteine methyl ester). Cysteine 172 carries the S-farnesyl cysteine lipid modification. A propeptide spans 173-175 (removed in mature form); it reads VIM.

It belongs to the protein-tyrosine phosphatase family.

It localises to the cytoplasm. The protein localises to the mitochondrion matrix. The protein resides in the kinetoplast. Its subcellular location is the secreted. It is found in the extracellular exosome. The enzyme catalyses O-phospho-L-tyrosyl-[protein] + H2O = L-tyrosyl-[protein] + phosphate. Its activity is regulated as follows. Activated in a reduced environment which promotes the reduction of the disulfide bond between the regulatory Cys-53 and catalytic Cys-114 residues. In terms of biological role, has protein tyrosine phosphatase activity and may act as a virulence factor to support intracellular survival in host macrophages. In Leishmania major, this protein is Protein tyrosine phosphatase PRL-1.